A 491-amino-acid polypeptide reads, in one-letter code: Probable cytosol aminopeptidase (491 aa).

Positions 264 and 269 each coordinate Mn(2+). Lys276 is an active-site residue. Residues Asp287, Asp346, and Glu348 each coordinate Mn(2+). Arg350 is a catalytic residue.

This sequence belongs to the peptidase M17 family. It depends on Mn(2+) as a cofactor.

It localises to the cytoplasm. The enzyme catalyses Release of an N-terminal amino acid, Xaa-|-Yaa-, in which Xaa is preferably Leu, but may be other amino acids including Pro although not Arg or Lys, and Yaa may be Pro. Amino acid amides and methyl esters are also readily hydrolyzed, but rates on arylamides are exceedingly low.. It catalyses the reaction Release of an N-terminal amino acid, preferentially leucine, but not glutamic or aspartic acids.. Its function is as follows. Presumably involved in the processing and regular turnover of intracellular proteins. Catalyzes the removal of unsubstituted N-terminal amino acids from various peptides. The protein is Probable cytosol aminopeptidase of Xylella fastidiosa (strain Temecula1 / ATCC 700964).